Reading from the N-terminus, the 332-residue chain is MNSFGRLFRVNVFGESHGASVGVNIDGIPAGIPLTQEDFLPDLERRKAGAKGTTPRKEEDLPFIKSGVFNDHTTGAPITILFENNNTRSTDYEKLREFPRPGHADFVATHKYGGFEDYRGGGHFSGRLTLNLVAAGVIAKKILGPGISVKATLKEVAGLPDAEQGLEAAIAAKDSVGGIVECVVEGLPIGLGEPFFDSVESTIAHAVFSIPAIKGIEFGAGFAAARMKGVEHNDAILDASGKTATNHAGGVVGGITNGNPLVFRVAVKPTSSTPKEQHTLNIKSGEVENFSVKGRHDLCIALRVPVVLEAVAAMALADFMLLEQRSNRVFKN.

R46 provides a ligand contact to NADP(+). FMN-binding positions include 123 to 125 (HFS), G253, 268 to 272 (KPTSS), and R295.

Belongs to the chorismate synthase family. As to quaternary structure, homotetramer. The cofactor is FMNH2.

It carries out the reaction 5-O-(1-carboxyvinyl)-3-phosphoshikimate = chorismate + phosphate. The protein operates within metabolic intermediate biosynthesis; chorismate biosynthesis; chorismate from D-erythrose 4-phosphate and phosphoenolpyruvate: step 7/7. In terms of biological role, catalyzes the anti-1,4-elimination of the C-3 phosphate and the C-6 proR hydrogen from 5-enolpyruvylshikimate-3-phosphate (EPSP) to yield chorismate, which is the branch point compound that serves as the starting substrate for the three terminal pathways of aromatic amino acid biosynthesis. This reaction introduces a second double bond into the aromatic ring system. The polypeptide is Chorismate synthase (Chitinophaga pinensis (strain ATCC 43595 / DSM 2588 / LMG 13176 / NBRC 15968 / NCIMB 11800 / UQM 2034)).